The primary structure comprises 78 residues: UPF0349 protein SSP1836 (78 aa).

It belongs to the UPF0349 family.

This is UPF0349 protein SSP1836 from Staphylococcus saprophyticus subsp. saprophyticus (strain ATCC 15305 / DSM 20229 / NCIMB 8711 / NCTC 7292 / S-41).